Here is a 339-residue protein sequence, read N- to C-terminus: Mitogen-activated protein kinase kinase kinase 18 (339 aa).

One can recognise a Protein kinase domain in the interval 3-263 (WTRGKTLGRG…ASQLLNHPFL (261 aa)). ATP is bound by residues 9–17 (LGRGSTATV) and lysine 32. Residue aspartate 131 is the Proton acceptor of the active site. Serine 301 bears the Phosphoserine mark.

This sequence belongs to the protein kinase superfamily. Ser/Thr protein kinase family. As to quaternary structure, interacts with ABI1. Binds to MKK3. Associates with SRK2E within the nucleus. Autophosphorylated. Post-translationally, unstable protein degraded by the proteasome pathway; this degradation is promoted by ABI1, but blocked by ABA. As to expression, expressed in roots, leaves and flowers.

It is found in the nucleus. The enzyme catalyses L-seryl-[protein] + ATP = O-phospho-L-seryl-[protein] + ADP + H(+). The catalysed reaction is L-threonyl-[protein] + ATP = O-phospho-L-threonyl-[protein] + ADP + H(+). Its activity is regulated as follows. Kinase activity is activated by abscisic acid (ABA). Inhibited by ABI1. Activated by SRK2E. Component of the abscisic acid (ABA) signaling pathway that acts as ABA signal transducer in the context of abiotic stresses. Triggers MPK1, MPK2, MPK7 and MPK14 activation in a MKK3-dependent manner and MPK6 activation in a MKK3-independent manner. Mediates the ABA-dependent activation of the MKK3-MPK7 module. Positive regulator of ABA responses leading to the induction of gene expression (e.g. RD29B and RAB18) and involved in various responses including stomatal development, stomatal movement, inhibition of germination and root growth. Promotes leaf senescence. The chain is Mitogen-activated protein kinase kinase kinase 18 from Arabidopsis thaliana (Mouse-ear cress).